The primary structure comprises 78 residues: Large ribosomal subunit protein bL28 (78 aa).

The protein belongs to the bacterial ribosomal protein bL28 family.

The protein is Large ribosomal subunit protein bL28 of Aromatoleum aromaticum (strain DSM 19018 / LMG 30748 / EbN1) (Azoarcus sp. (strain EbN1)).